The following is a 304-amino-acid chain: Nucleotide-binding protein ROP_69550 (304 aa).

Position 24–31 (24–31) interacts with ATP; sequence GLSGAGLQ. 75 to 78 serves as a coordination point for GTP; sequence DVRS.

Belongs to the RapZ-like family.

Functionally, displays ATPase and GTPase activities. This Rhodococcus opacus (strain B4) protein is Nucleotide-binding protein ROP_69550.